Here is a 209-residue protein sequence, read N- to C-terminus: Uracil phosphoribosyltransferase (209 aa).

5-phospho-alpha-D-ribose 1-diphosphate-binding positions include R79, R104, and D131–S139. Residues I194 and G199–A201 each bind uracil. D200 serves as a coordination point for 5-phospho-alpha-D-ribose 1-diphosphate.

The protein belongs to the UPRTase family. Mg(2+) serves as cofactor.

The catalysed reaction is UMP + diphosphate = 5-phospho-alpha-D-ribose 1-diphosphate + uracil. The protein operates within pyrimidine metabolism; UMP biosynthesis via salvage pathway; UMP from uracil: step 1/1. With respect to regulation, allosterically activated by GTP. Functionally, catalyzes the conversion of uracil and 5-phospho-alpha-D-ribose 1-diphosphate (PRPP) to UMP and diphosphate. In Anoxybacillus flavithermus (strain DSM 21510 / WK1), this protein is Uracil phosphoribosyltransferase.